The sequence spans 892 residues: Zinc finger protein 473 homolog (892 aa).

Positions 23-101 (ETLKDLAMDF…TKSSPLQSGF (79 aa)) constitute a KRAB domain. 2 stretches are compositionally biased toward polar residues: residues 66-76 (DTSQPSLTSQP) and 84-97 (ATSTEVPETKSSPL). Disordered regions lie at residues 66–97 (DTSQPSLTSQPDVREELEATSTEVPETKSSPL) and 134–203 (GDPE…DSVQ). Composition is skewed to basic and acidic residues over residues 138–156 (SLPRPDISDKESPADHQSP) and 190–203 (KESRSDLSQEDSVQ). C2H2-type zinc fingers lie at residues 209–231 (YKCSECGESFSQSHHLIQHWVLH) and 265–287 (YTCQECGKRFSQNVYLQWHQKIH). Positions 297–308 (SDSNLEGLSRSP) are enriched in polar residues. The segment at 297–370 (SDSNLEGLSR…HPKPLRHQKT (74 aa)) is disordered. Basic and acidic residues-rich tracts occupy residues 313–323 (GKQRLSKDTDS) and 332–353 (QDQEKPPTGESRDQENLHESQP). C2H2-type zinc fingers lie at residues 377–399 (FRCKKCGETFSGAFHLAKHQRAH), 404–426 (YKCASCPAVFNLSKHCFQHRKSH), 432–454 (CECQGCRKSFNWRSSLIKHQAIH), 460–482 (YKCDECGKAFNHSSTLKIHQRIH), 488–510 (HKCSECGKAFCRRTDLTEHQRVH), 516–538 (HQCPVCARTFNRPSHLVRHRLRH), 544–566 (FGCAKCKETFIYKEQLERHNKIH), and 572–594 (YECKQCGEHFICRSTLNCHLSIH). Lys476 is covalently cross-linked (Glycyl lysine isopeptide (Lys-Gly) (interchain with G-Cter in SUMO2)). Residue Lys602 forms a Glycyl lysine isopeptide (Lys-Gly) (interchain with G-Cter in SUMO2) linkage. The C2H2-type 11; degenerate zinc finger occupies 697–719 (FKCDIYNRAFKQRAHLSKHQLIH). 6 consecutive C2H2-type zinc fingers follow at residues 725–747 (FKCNECDRAFKQSNYLIQHQKTH), 753–775 (FECSECGKTFHQRSCLSKHQKIH), 781–803 (FKCGDCGKAFISGAQLIRHQRIH), 809–831 (YVCQECGKTFSQSSCLTLHLRIH), 837–859 (YTCGTCGKAFAQRANQRKHERIH), and 865–887 (YACGLCGKAFGLRTHLQQHQRIH).

It belongs to the krueppel C2H2-type zinc-finger protein family. In terms of assembly, interacts with the SLBP/pre-mRNA complex but not with SLBP alone. Interacts with LSM11 in a U7 snRNP-dependent manner.

The protein resides in the nucleus. Involved in histone 3'-end pre-mRNA processing by associating with U7 snRNP and interacting with SLBP/pre-mRNA complex. Increases histone 3'-end pre-mRNA processing but has no effect on U7 snRNP levels, when overexpressed. Required for cell cycle progression from G1 to S phases. This Mus musculus (Mouse) protein is Zinc finger protein 473 homolog (Znf473).